The sequence spans 558 residues: Atlastin-1 (558 aa).

The segment at 1 to 28 is disordered; the sequence is MAKSRRDRNSWGGFSEKSSDWSSEEEEP. The tract at residues 1-34 is N-terminal hypervariable region (HVR); that stretch reads MAKSRRDRNSWGGFSEKSSDWSSEEEEPVRKAGP. The Cytoplasmic segment spans residues 1 to 449; it reads MAKSRRDRNS…NIFHAARTPA (449 aa). Residues serine 10, serine 22, and serine 23 each carry the phosphoserine modification. Residues 64–309 form the GB1/RHD3-type G domain; the sequence is DKEVVAVSVA…LIPWLLSPER (246 aa). Residues arginine 77, lysine 78, glycine 79, lysine 80, serine 81, phenylalanine 82, glutamine 148, arginine 217, aspartate 218, valine 276, and asparagine 279 each coordinate GDP. The GTP site is built by arginine 77, lysine 78, glycine 79, lysine 80, serine 81, and phenylalanine 82. Serine 81 provides a ligand contact to Mg(2+). GTP is bound by residues arginine 217, aspartate 218, and valine 276. Residues 347-438 are 3HB (three-helix bundle) domain; sequence MLQATAEANN…YIQYIKHNDS (92 aa). Lysine 395 bears the N6-acetyllysine mark. Residues 412 to 439 are a coiled coil; it reads EFSRRYLQQLESEIDELYIQYIKHNDSK. A linker region spans residues 439–447; sequence KNIFHAART. Residues 450 to 470 traverse the membrane as a helical segment; it reads TLFVVIFITYVIAGVTGFIGL. Position 471 (aspartate 471) is a topological domain, lumenal. Residues 472 to 492 form a helical membrane-spanning segment; sequence IIASLCNMIMGLTLITLCTWA. Residues 493 to 558 are Cytoplasmic-facing; that stretch reads YIRYSGEYRE…PTQQPEKKKI (66 aa). Positions 521–558 are autoinhibitory domain; sequence NEALYKLYSAAATHRHLCHQAFPAPKSEPTQQPEKKKI.

This sequence belongs to the TRAFAC class dynamin-like GTPase superfamily. GB1/RHD3 GTPase family. GB1 subfamily. In terms of assembly, monomeric and homodimeric. The homodimer, transiently formed by two molecules on opposing membranes, is the active form mediating ER membrane fusion. Interacts with REEP1, REEP5, RTN3 and RTN4 (via the transmembrane region); these proteins are involved in endoplasmic reticulum tubular network organization. Interacts with ZFYVE27; both proteins are involved in endoplasmic reticulum tubular network organization. Interacts with ARL6IP1; both proteins are involved in endoplasmic reticulum tubular network organization. Interacts with SPAST; the interaction is direct, could recruit SPAST to Golgi membranes. Interacts (via N-terminal region) with MAP4K4 (via CNH regulatory domain). May interact with TMED2. Interacts with CPT1C. Phosphorylated. Phosphorylation, by different kinases, of the N-terminal hypervariable region (HVR) regulates the ATL1-mediated membrane tethering step.

The protein resides in the endoplasmic reticulum membrane. The protein localises to the golgi apparatus membrane. It is found in the cell projection. Its subcellular location is the axon. It catalyses the reaction GTP + H2O = GDP + phosphate + H(+). In terms of biological role, atlastin-1 (ATL1) is a membrane-anchored GTPase that mediates the GTP-dependent fusion of endoplasmic reticulum (ER) membranes, maintaining the continuous ER network. It facilitates the formation of three-way junctions where ER tubules intersect. Two atlastin-1 on neighboring ER tubules bind GTP and form loose homodimers through the GB1/RHD3-type G domains and 3HB regions. Upon GTP hydrolysis, the 3HB regions tighten, pulling the membranes together to drive their fusion. After fusion, the homodimer disassembles upon release of inorganic phosphate (Pi). Subsequently, GDP dissociates, resetting the monomers to a conformation ready for a new fusion cycle. May also regulate more or less directly Golgi biogenesis. Indirectly regulates axonal development. The polypeptide is Atlastin-1 (Mus musculus (Mouse)).